Reading from the N-terminus, the 723-residue chain is Aspartate--tRNA(Asp/Asn) ligase 1 (723 aa).

Glutamate 206 is an L-aspartate binding site. The tract at residues 230–233 (QLFK) is aspartate. Arginine 252 contacts L-aspartate. ATP contacts are provided by residues 252–254 (RDE) and glutamine 261. Histidine 481 contributes to the L-aspartate binding site. Glutamate 516 contributes to the ATP binding site. Arginine 523 is an L-aspartate binding site. 568–571 (GMDR) provides a ligand contact to ATP.

The protein belongs to the class-II aminoacyl-tRNA synthetase family. Type 1 subfamily. As to quaternary structure, homodimer.

The protein localises to the cytoplasm. It carries out the reaction tRNA(Asx) + L-aspartate + ATP = L-aspartyl-tRNA(Asx) + AMP + diphosphate. Its function is as follows. Aspartyl-tRNA synthetase with relaxed tRNA specificity since it is able to aspartylate not only its cognate tRNA(Asp) but also tRNA(Asn). Reaction proceeds in two steps: L-aspartate is first activated by ATP to form Asp-AMP and then transferred to the acceptor end of tRNA(Asp/Asn). This chain is Aspartate--tRNA(Asp/Asn) ligase 1, found in Syntrophus aciditrophicus (strain SB).